Here is a 249-residue protein sequence, read N- to C-terminus: Proteasome subunit alpha (249 aa).

The protein belongs to the peptidase T1A family. As to quaternary structure, the 20S proteasome core is composed of 14 alpha and 14 beta subunits that assemble into four stacked heptameric rings, resulting in a barrel-shaped structure. The two inner rings, each composed of seven catalytic beta subunits, are sandwiched by two outer rings, each composed of seven alpha subunits. The catalytic chamber with the active sites is on the inside of the barrel. Has a gated structure, the ends of the cylinder being occluded by the N-termini of the alpha-subunits. Is capped at one or both ends by the proteasome regulatory ATPase, PAN.

The protein localises to the cytoplasm. With respect to regulation, the formation of the proteasomal ATPase PAN-20S proteasome complex, via the docking of the C-termini of PAN into the intersubunit pockets in the alpha-rings, triggers opening of the gate for substrate entry. Interconversion between the open-gate and close-gate conformations leads to a dynamic regulation of the 20S proteasome proteolysis activity. Functionally, component of the proteasome core, a large protease complex with broad specificity involved in protein degradation. In Methanosarcina mazei (strain ATCC BAA-159 / DSM 3647 / Goe1 / Go1 / JCM 11833 / OCM 88) (Methanosarcina frisia), this protein is Proteasome subunit alpha.